Here is a 156-residue protein sequence, read N- to C-terminus: SsrA-binding protein (156 aa).

The protein belongs to the SmpB family.

The protein resides in the cytoplasm. Its function is as follows. Required for rescue of stalled ribosomes mediated by trans-translation. Binds to transfer-messenger RNA (tmRNA), required for stable association of tmRNA with ribosomes. tmRNA and SmpB together mimic tRNA shape, replacing the anticodon stem-loop with SmpB. tmRNA is encoded by the ssrA gene; the 2 termini fold to resemble tRNA(Ala) and it encodes a 'tag peptide', a short internal open reading frame. During trans-translation Ala-aminoacylated tmRNA acts like a tRNA, entering the A-site of stalled ribosomes, displacing the stalled mRNA. The ribosome then switches to translate the ORF on the tmRNA; the nascent peptide is terminated with the 'tag peptide' encoded by the tmRNA and targeted for degradation. The ribosome is freed to recommence translation, which seems to be the essential function of trans-translation. Required for trans-translation. Probably required for sporulation; deletion of the gene for tmRNA impairs sporulation via its effect on trans-translation, and as smpB is required for trans-translation under non-stress conditions, it is also probably required during sporulation. This Bacillus subtilis (strain 168) protein is SsrA-binding protein.